The sequence spans 239 residues: Putative ABC transporter ATP-binding protein AlbC (239 aa).

The region spanning 4–238 (LDIHDVSVWY…RREFFEVIGH (235 aa)) is the ABC transporter domain. 37–44 (GVNGAGKT) provides a ligand contact to ATP.

Belongs to the ABC transporter superfamily.

Functionally, involved in the production of the bacteriocin subtilosin. Required for immunity to subtilosin. The chain is Putative ABC transporter ATP-binding protein AlbC (albC) from Bacillus subtilis (strain 168).